A 745-amino-acid chain; its full sequence is Myeloperoxidase (745 aa).

Positions 1-48 (MGVPFFSSLRCMVDLGPCWAGGLTAEMKLLLALAGLLAILATPQPSEG) are cleaved as a signal peptide. A glycan (N-linked (GlcNAc...) asparagine) is linked at N139. A disulfide bridge connects residues C167 and C180. D260 contributes to the heme b binding site. Catalysis depends on H261, which acts as the Proton acceptor. D262 contributes to the Ca(2+) binding site. Disulfide bonds link C281–C291 and C285–C309. C316 bears the Cysteine sulfenic acid (-SOH) mark. N323 carries an N-linked (GlcNAc...) asparagine glycan. Ca(2+) contacts are provided by T334, F336, D338, and S340. 2 N-linked (GlcNAc...) asparagine glycosylation sites follow: N355 and N391. C387 and C398 are oxidised to a cystine. E408 and M409 together coordinate heme b. An N-linked (GlcNAc...) asparagine glycan is attached at N483. H502 contacts heme b. 2 disulfide bridges follow: C606/C663 and C704/C730. N-linked (GlcNAc...) asparagine glycosylation occurs at N729.

Belongs to the peroxidase family. XPO subfamily. In terms of assembly, homodimer; disulfide-linked. Each monomer consists of a light and a heavy chain. Found in a complex with CP and LTF; interacts directly with CP, which protects CP antioxidant properties by MPO. It depends on Ca(2+) as a cofactor. The cofactor is heme b.

The protein resides in the lysosome. The catalysed reaction is chloride + H2O2 + H(+) = hypochlorous acid + H2O. Functionally, part of the host defense system of polymorphonuclear leukocytes. It is responsible for microbicidal activity against a wide range of organisms. In the stimulated PMN, MPO catalyzes the production of hypohalous acids, primarily hypochlorous acid in physiologic situations, and other toxic intermediates that greatly enhance PMN microbicidal activity. Mediates the proteolytic cleavage of alpha-1-microglobulin to form t-alpha-1-microglobulin, which potently inhibits oxidation of low-density lipoprotein particles and limits vascular damage. The protein is Myeloperoxidase of Homo sapiens (Human).